The chain runs to 707 residues: Polyribonucleotide nucleotidyltransferase (707 aa).

2 residues coordinate Mg(2+): aspartate 485 and aspartate 491. The KH domain maps to 552 to 611 (PRIHTMKINSDKIKDVIGKGGAVIRALTEETGTTIEIEDDGTIKIAATEGAAAKEAIRRI). Residues 621 to 689 (GRIYTGKVMR…RQGRIRLSMK (69 aa)) form the S1 motif domain.

It belongs to the polyribonucleotide nucleotidyltransferase family. Component of the RNA degradosome, which is a multiprotein complex involved in RNA processing and mRNA degradation. The cofactor is Mg(2+).

Its subcellular location is the cytoplasm. It carries out the reaction RNA(n+1) + phosphate = RNA(n) + a ribonucleoside 5'-diphosphate. Functionally, involved in mRNA degradation. Catalyzes the phosphorolysis of single-stranded polyribonucleotides processively in the 3'- to 5'-direction. The protein is Polyribonucleotide nucleotidyltransferase of Photobacterium profundum (strain SS9).